The primary structure comprises 497 residues: Probable cytosol aminopeptidase (497 aa).

2 residues coordinate Mn(2+): lysine 264 and aspartate 269. Residue lysine 276 is part of the active site. The Mn(2+) site is built by aspartate 287, aspartate 346, and glutamate 348. Residue arginine 350 is part of the active site.

It belongs to the peptidase M17 family. It depends on Mn(2+) as a cofactor.

It is found in the cytoplasm. The catalysed reaction is Release of an N-terminal amino acid, Xaa-|-Yaa-, in which Xaa is preferably Leu, but may be other amino acids including Pro although not Arg or Lys, and Yaa may be Pro. Amino acid amides and methyl esters are also readily hydrolyzed, but rates on arylamides are exceedingly low.. It carries out the reaction Release of an N-terminal amino acid, preferentially leucine, but not glutamic or aspartic acids.. Functionally, presumably involved in the processing and regular turnover of intracellular proteins. Catalyzes the removal of unsubstituted N-terminal amino acids from various peptides. The sequence is that of Probable cytosol aminopeptidase from Persephonella marina (strain DSM 14350 / EX-H1).